Here is a 432-residue protein sequence, read N- to C-terminus: Adenylosuccinate synthetase (432 aa).

Residues 12-18 (GDEGKGK) and 40-42 (GHT) contribute to the GTP site. Asp13 (proton acceptor) is an active-site residue. Positions 13 and 40 each coordinate Mg(2+). Residues 13 to 16 (DEGK), 38 to 41 (NAGH), Thr132, Arg146, Gln226, Thr241, and Arg305 contribute to the IMP site. His41 serves as the catalytic Proton donor. 301–307 (VVTGRKR) is a binding site for substrate. Residues Arg307, 333-335 (KLD), and 415-417 (STS) each bind GTP.

The protein belongs to the adenylosuccinate synthetase family. As to quaternary structure, homodimer. Requires Mg(2+) as cofactor.

It is found in the cytoplasm. It catalyses the reaction IMP + L-aspartate + GTP = N(6)-(1,2-dicarboxyethyl)-AMP + GDP + phosphate + 2 H(+). It participates in purine metabolism; AMP biosynthesis via de novo pathway; AMP from IMP: step 1/2. In terms of biological role, plays an important role in the de novo pathway of purine nucleotide biosynthesis. Catalyzes the first committed step in the biosynthesis of AMP from IMP. The protein is Adenylosuccinate synthetase of Mesorhizobium japonicum (strain LMG 29417 / CECT 9101 / MAFF 303099) (Mesorhizobium loti (strain MAFF 303099)).